The chain runs to 117 residues: Large ribosomal subunit protein bL20 (117 aa).

Belongs to the bacterial ribosomal protein bL20 family.

Its function is as follows. Binds directly to 23S ribosomal RNA and is necessary for the in vitro assembly process of the 50S ribosomal subunit. It is not involved in the protein synthesizing functions of that subunit. The sequence is that of Large ribosomal subunit protein bL20 from Rickettsia africae (strain ESF-5).